The chain runs to 246 residues: Carboxymethylenebutenolidase homolog (246 aa).

Active-site residues include cysteine 132, aspartate 179, and histidine 212.

The protein belongs to the dienelactone hydrolase family.

It is found in the cytoplasm. The protein localises to the cytosol. Its function is as follows. Cysteine hydrolase. This Xenopus tropicalis (Western clawed frog) protein is Carboxymethylenebutenolidase homolog (cmbl).